We begin with the raw amino-acid sequence, 107 residues long: NADH-quinone oxidoreductase subunit K (107 aa).

Helical transmembrane passes span 9–29 (IGVN…MFAV), 36–56 (IVIL…FLTF), and 68–88 (FSLF…AIVI).

This sequence belongs to the complex I subunit 4L family. As to quaternary structure, NDH-1 is composed of 14 different subunits. Subunits NuoA, H, J, K, L, M, N constitute the membrane sector of the complex.

It is found in the cell inner membrane. It catalyses the reaction a quinone + NADH + 5 H(+)(in) = a quinol + NAD(+) + 4 H(+)(out). In terms of biological role, NDH-1 shuttles electrons from NADH, via FMN and iron-sulfur (Fe-S) centers, to quinones in the respiratory chain. The immediate electron acceptor for the enzyme in this species is believed to be a menaquinone. Couples the redox reaction to proton translocation (for every two electrons transferred, four hydrogen ions are translocated across the cytoplasmic membrane), and thus conserves the redox energy in a proton gradient. In Chlorobaculum tepidum (strain ATCC 49652 / DSM 12025 / NBRC 103806 / TLS) (Chlorobium tepidum), this protein is NADH-quinone oxidoreductase subunit K.